The following is a 1054-amino-acid chain: Calcium-transporting ATPase 2, endoplasmic reticulum-type (1054 aa).

Over 1 to 53 (MEEEKSFSAWSWSVEQCLKEYKTRLDKGLTSEDVQIRRQKYGFNELAKEKGKP) the chain is Cytoplasmic. A helical membrane pass occupies residues 54 to 74 (LWHLVLEQFDDTLVKILLGAA). The Lumenal segment spans residues 75–98 (FISFVLAFLGEEHGSGSGFEAFVE). The chain crosses the membrane as a helical span at residues 99 to 118 (PFVIVLILILNAVVGVWQES). The Cytoplasmic portion of the chain corresponds to 119 to 262 (NAEKALEALK…ESETPLKKKL (144 aa)). Residues 263–282 (DEFGSRLTTAICIVCVLVWM) traverse the membrane as a helical segment. At 283 to 312 (INYKNFVSWDVVDGYKPVNIKFSFEKCTYY) the chain is on the lumenal side. The chain crosses the membrane as a helical span at residues 313-330 (FKIAVALAVAAIPEGLPA). Residues valine 321, alanine 322, isoleucine 324, and glutamate 326 each coordinate Ca(2+). Residues 331 to 782 (VITTCLALGT…AEGRSIYNNM (452 aa)) lie on the Cytoplasmic side of the membrane. Aspartate 368 functions as the 4-aspartylphosphate intermediate in the catalytic mechanism. Residues aspartate 727 and aspartate 731 each coordinate Mg(2+). A helical membrane pass occupies residues 783–802 (KAFIRYMISSNVGEVISIFL). 2 residues coordinate Ca(2+): asparagine 793 and glutamate 796. Residues 803–812 (TAALGIPECM) are Lumenal-facing. Residues 813–833 (IPVQLLWVNLVTDGPPATALG) traverse the membrane as a helical segment. 3 residues coordinate Ca(2+): asparagine 821, threonine 824, and aspartate 825. Residues 834–853 (FNPADIDIMKKPPRKSDDCL) are Cytoplasmic-facing. A helical transmembrane segment spans residues 854 to 876 (IDSWVLIRYLVIGSYVGVATVGI). Residues 877–949 (FVLWYTQASF…YFTLGKVKPM (73 aa)) lie on the Lumenal side of the membrane. A helical transmembrane segment spans residues 950–969 (TLSLTVLVAIEMFNSLNALS). Residue glutamate 960 coordinates Ca(2+). Over 970-982 (EDNSLLTMPPWRN) the chain is Cytoplasmic. Residues 983 to 1001 (PWLLVAMTVSFALHCVILY) form a helical membrane-spanning segment. The Lumenal segment spans residues 1002 to 1016 (VPFLANVFGIVPLSF). The chain crosses the membrane as a helical span at residues 1017 to 1037 (REWFVVILVSFPVILIDEALK). Residues 1038–1054 (FIGRCRRTRIKKKIKTM) lie on the Cytoplasmic side of the membrane.

Belongs to the cation transport ATPase (P-type) (TC 3.A.3) family. Type IIA subfamily.

The protein resides in the membrane. It carries out the reaction Ca(2+)(in) + ATP + H2O = Ca(2+)(out) + ADP + phosphate + H(+). Functionally, this magnesium-dependent enzyme catalyzes the hydrolysis of ATP coupled with the translocation of calcium from the cytosol to an endomembrane compartment. This is Calcium-transporting ATPase 2, endoplasmic reticulum-type (ECA2) from Arabidopsis thaliana (Mouse-ear cress).